A 150-amino-acid chain; its full sequence is D-aminoacyl-tRNA deacylase (150 aa).

A Gly-cisPro motif, important for rejection of L-amino acids motif is present at residues 136–137; the sequence is GP.

Belongs to the DTD family. As to quaternary structure, homodimer.

It localises to the cytoplasm. The enzyme catalyses glycyl-tRNA(Ala) + H2O = tRNA(Ala) + glycine + H(+). The catalysed reaction is a D-aminoacyl-tRNA + H2O = a tRNA + a D-alpha-amino acid + H(+). Its function is as follows. An aminoacyl-tRNA editing enzyme that deacylates mischarged D-aminoacyl-tRNAs. Also deacylates mischarged glycyl-tRNA(Ala), protecting cells against glycine mischarging by AlaRS. Acts via tRNA-based rather than protein-based catalysis; rejects L-amino acids rather than detecting D-amino acids in the active site. By recycling D-aminoacyl-tRNA to D-amino acids and free tRNA molecules, this enzyme counteracts the toxicity associated with the formation of D-aminoacyl-tRNA entities in vivo and helps enforce protein L-homochirality. The protein is D-aminoacyl-tRNA deacylase of Staphylococcus aureus (strain Mu50 / ATCC 700699).